Here is a 32-residue protein sequence, read N- to C-terminus: Secreted proteinase (32 aa).

The interval 1 to 32 (DTANDPKYGSQYAPQKVNADVDQGVXXXHPEL) is disordered. The Charge relay system role is filled by Asp-22.

This sequence belongs to the peptidase S8 family.

Its subcellular location is the secreted. The polypeptide is Secreted proteinase (Haloferax mediterranei (Halobacterium mediterranei)).